Reading from the N-terminus, the 226-residue chain is Enolase-phosphatase E1 (226 aa).

It belongs to the HAD-like hydrolase superfamily. MasA/MtnC family. As to quaternary structure, monomer. It depends on Mg(2+) as a cofactor.

It catalyses the reaction 5-methylsulfanyl-2,3-dioxopentyl phosphate + H2O = 1,2-dihydroxy-5-(methylsulfanyl)pent-1-en-3-one + phosphate. It participates in amino-acid biosynthesis; L-methionine biosynthesis via salvage pathway; L-methionine from S-methyl-5-thio-alpha-D-ribose 1-phosphate: step 3/6. Its pathway is amino-acid biosynthesis; L-methionine biosynthesis via salvage pathway; L-methionine from S-methyl-5-thio-alpha-D-ribose 1-phosphate: step 4/6. In terms of biological role, bifunctional enzyme that catalyzes the enolization of 2,3-diketo-5-methylthiopentyl-1-phosphate (DK-MTP-1-P) into the intermediate 2-hydroxy-3-keto-5-methylthiopentenyl-1-phosphate (HK-MTPenyl-1-P), which is then dephosphorylated to form the acireductone 1,2-dihydroxy-3-keto-5-methylthiopentene (DHK-MTPene). This chain is Enolase-phosphatase E1, found in Shewanella baltica (strain OS223).